The chain runs to 77 residues: Membrane-associated ATPase epsilon chain (77 aa).

The protein to E.hirae NtpH. As to quaternary structure, sul-ATPase is composed of six (or maybe five) subunits: alpha, beta, delta, gamma, C (proteolipid), and possibly epsilon.

It carries out the reaction ATP + H2O + 4 H(+)(in) = ADP + phosphate + 5 H(+)(out). The sequence is that of Membrane-associated ATPase epsilon chain (atpE) from Sulfolobus acidocaldarius (strain ATCC 33909 / DSM 639 / JCM 8929 / NBRC 15157 / NCIMB 11770).